Reading from the N-terminus, the 300-residue chain is Cholesterol 25-hydroxylase-like protein (300 aa).

An N-linked (GlcNAc...) asparagine glycan is attached at Asn9. 3 helical membrane passes run 54 to 73, 95 to 115, and 130 to 152; these read YTWV…VPFF, LQGW…LIWV, and MLSQ…HYIN. The region spanning 135–266 is the Fatty acid hydroxylase domain; that stretch reads AIFFLAFDFT…WFNYLDRLMG (132 aa). The Histidine box-1 signature appears at 148–152; sequence FHYIN. The Histidine box-2 signature appears at 163-167; it reads HSVHH. The helical transmembrane segment at 192 to 212 threads the bilayer; the sequence is ITTIPWIFPTHCLTYWIWFFI. The Histidine box-3 signature appears at 242 to 248; the sequence is AHDMHHL.

It belongs to the sterol desaturase family. Fe cation serves as cofactor.

Its subcellular location is the membrane. In terms of biological role, probable sterol desaturase. This Caenorhabditis elegans protein is Cholesterol 25-hydroxylase-like protein.